The sequence spans 428 residues: Serine--tRNA ligase (428 aa).

An L-serine-binding site is contributed by 235 to 237 (TAE). ATP is bound at residue 266–268 (RSE). Glutamate 289 provides a ligand contact to L-serine. 353–356 (EISS) is an ATP binding site. Serine 389 is an L-serine binding site.

The protein belongs to the class-II aminoacyl-tRNA synthetase family. Type-1 seryl-tRNA synthetase subfamily. As to quaternary structure, homodimer. The tRNA molecule binds across the dimer.

It is found in the cytoplasm. The enzyme catalyses tRNA(Ser) + L-serine + ATP = L-seryl-tRNA(Ser) + AMP + diphosphate + H(+). It carries out the reaction tRNA(Sec) + L-serine + ATP = L-seryl-tRNA(Sec) + AMP + diphosphate + H(+). The protein operates within aminoacyl-tRNA biosynthesis; selenocysteinyl-tRNA(Sec) biosynthesis; L-seryl-tRNA(Sec) from L-serine and tRNA(Sec): step 1/1. Functionally, catalyzes the attachment of serine to tRNA(Ser). Is also able to aminoacylate tRNA(Sec) with serine, to form the misacylated tRNA L-seryl-tRNA(Sec), which will be further converted into selenocysteinyl-tRNA(Sec). The chain is Serine--tRNA ligase from Shewanella baltica (strain OS223).